The following is a 190-amino-acid chain: Small ribosomal subunit protein mS23 (190 aa).

At Ala2 the chain carries N-acetylalanine. Lys102 is modified (N6-acetyllysine). The segment at 139 to 190 (RTQHGGSHVSRKSEHLSVRPQTALEENETQKEVPQDQHLEAPADQSKGLLPP) is disordered. Basic and acidic residues predominate over residues 166 to 179 (ETQKEVPQDQHLEA).

It belongs to the mitochondrion-specific ribosomal protein mS23 family. Component of the mitochondrial small ribosomal subunit (mt-SSU). Mature mammalian 55S mitochondrial ribosomes consist of a small (28S) and a large (39S) subunit. The 28S small subunit contains a 12S ribosomal RNA (12S mt-rRNA) and 30 different proteins. The 39S large subunit contains a 16S rRNA (16S mt-rRNA), a copy of mitochondrial valine transfer RNA (mt-tRNA(Val)), which plays an integral structural role, and 52 different proteins.

The protein localises to the mitochondrion. The protein is Small ribosomal subunit protein mS23 (MRPS23) of Homo sapiens (Human).